Reading from the N-terminus, the 107-residue chain is Phosphoribosyl-ATP pyrophosphatase (107 aa).

The protein belongs to the PRA-PH family.

It localises to the cytoplasm. It catalyses the reaction 1-(5-phospho-beta-D-ribosyl)-ATP + H2O = 1-(5-phospho-beta-D-ribosyl)-5'-AMP + diphosphate + H(+). Its pathway is amino-acid biosynthesis; L-histidine biosynthesis; L-histidine from 5-phospho-alpha-D-ribose 1-diphosphate: step 2/9. This chain is Phosphoribosyl-ATP pyrophosphatase, found in Sinorhizobium medicae (strain WSM419) (Ensifer medicae).